The sequence spans 354 residues: Holliday junction branch migration complex subunit RuvB (354 aa).

Positions 1–22 (MTLQTDDFAPAPARRVVSAAPA) are disordered. The segment at 5-194 (TDDFAPAPAR…FGIVARLEFY (190 aa)) is large ATPase domain (RuvB-L). Residues 9–22 (APAPARRVVSAAPA) show a composition bias toward low complexity. Residues leucine 33, arginine 34, glycine 75, lysine 78, threonine 79, threonine 80, 141–143 (EDY), arginine 184, tyrosine 194, and arginine 231 each bind ATP. Threonine 79 is a Mg(2+) binding site. The small ATPAse domain (RuvB-S) stretch occupies residues 195–265 (SAQELARIVK…IAERALAMLD (71 aa)). Residues 268–354 (PEGLDVMDRK…GAQAPGLFAV (87 aa)) are head domain (RuvB-H). 2 residues coordinate DNA: arginine 323 and arginine 328.

This sequence belongs to the RuvB family. In terms of assembly, homohexamer. Forms an RuvA(8)-RuvB(12)-Holliday junction (HJ) complex. HJ DNA is sandwiched between 2 RuvA tetramers; dsDNA enters through RuvA and exits via RuvB. An RuvB hexamer assembles on each DNA strand where it exits the tetramer. Each RuvB hexamer is contacted by two RuvA subunits (via domain III) on 2 adjacent RuvB subunits; this complex drives branch migration. In the full resolvosome a probable DNA-RuvA(4)-RuvB(12)-RuvC(2) complex forms which resolves the HJ.

The protein resides in the cytoplasm. The catalysed reaction is ATP + H2O = ADP + phosphate + H(+). The RuvA-RuvB-RuvC complex processes Holliday junction (HJ) DNA during genetic recombination and DNA repair, while the RuvA-RuvB complex plays an important role in the rescue of blocked DNA replication forks via replication fork reversal (RFR). RuvA specifically binds to HJ cruciform DNA, conferring on it an open structure. The RuvB hexamer acts as an ATP-dependent pump, pulling dsDNA into and through the RuvAB complex. RuvB forms 2 homohexamers on either side of HJ DNA bound by 1 or 2 RuvA tetramers; 4 subunits per hexamer contact DNA at a time. Coordinated motions by a converter formed by DNA-disengaged RuvB subunits stimulates ATP hydrolysis and nucleotide exchange. Immobilization of the converter enables RuvB to convert the ATP-contained energy into a lever motion, pulling 2 nucleotides of DNA out of the RuvA tetramer per ATP hydrolyzed, thus driving DNA branch migration. The RuvB motors rotate together with the DNA substrate, which together with the progressing nucleotide cycle form the mechanistic basis for DNA recombination by continuous HJ branch migration. Branch migration allows RuvC to scan DNA until it finds its consensus sequence, where it cleaves and resolves cruciform DNA. In Verminephrobacter eiseniae (strain EF01-2), this protein is Holliday junction branch migration complex subunit RuvB.